Here is a 423-residue protein sequence, read N- to C-terminus: Hypoxia responsive morphology factor B (423 aa).

Positions 46–69 (KRSKTRRPKKEYKLQYENTKAHRV) match the Bipartite nuclear localization signal motif. The interval 157-187 (TQNCWAYRAAYLNAVHTIFSEQICSAMEVSP) is RNA recognition motif (RRM)-like domain. A compositionally biased stretch (polar residues) spans 243–257 (LSPQSGRGPEPSTQI). A disordered region spans residues 243–273 (LSPQSGRGPEPSTQIAEPGRHDSQSEQSTIS).

Belongs to the hrmA family.

It is found in the nucleus. Its function is as follows. Probably modulates the generation of the hypoxia-typic morphotype (called H-MORPH) with altered biofilm architecture that leads to increased host inflammation, rapid disease progression, and mortality in a murine model of invasive aspergillosis. This Aspergillus fumigatus (strain CBS 144.89 / FGSC A1163 / CEA10) (Neosartorya fumigata) protein is Hypoxia responsive morphology factor B.